Here is a 299-residue protein sequence, read N- to C-terminus: 5,10-dihydrophenazine-1-carboxylate 9-dimethylallyltransferase (299 aa).

Belongs to the aromatic prenyltransferase family.

The catalysed reaction is 5,10-dihydrophenazine 1-carboxylate + dimethylallyl diphosphate = 5,10-dihydro-9-dimethylallylphenazine 1-carboxylate + diphosphate. It functions in the pathway antibiotic biosynthesis; phenazine biosynthesis. With respect to regulation, does not require magnesium or any other divalent metal ions for activity. Functionally, involved in the biosynthesis of prenylated phenazines. Catalyzes the transfer of a dimethylallyl moiety to C-9 of 5,10-dihydrophenazine 1-carboxylate (dihydro-PCA). Specific for both dimethylallyl diphosphate and dihydro-PCA. The protein is 5,10-dihydrophenazine-1-carboxylate 9-dimethylallyltransferase of Streptomyces anulatus (Streptomyces chrysomallus).